The sequence spans 606 residues: MARISFSYLCPASWYFTVPTVSPFLRQRVAFLGLFFIPCVLLLLLIMDLRHWATSLPRDRQYERYLARVGDLEATNTEDPNLNYGLVVDCGSSGSRIFVYFWPRHNGNPHDLLDIKQMRDRNSQPVVKKIKPGISAMADTPEHASDYLRPLLSFAAAHVPVKKHRETPLYILCTAGMRLLPERQQLAILADLVKDLPLEFDFLFSQSQAEVISGKQEGVYAWIGINFVLGRFDHEDESDSDTSVDSAAGRRRTVGILDMGGASLQIAYEVPTSASDLPPKQEEAAKILLAEFNLGCDVQHTEHVYRVYVTTFLGFGGNFARQRYEDLVLNETLNKNRLLGQKTGLSPDNPFLDPCLPVGLTDMVKRNNQVLHFRGKGDWASCRTLLSPLLARSNTSQASLNGIYQSPIDFNNSEFYGFSEFFYCTEDVLRIGGHYHGPTFAKAAQDYCGMAWPVLAQRFKNGLFSSHADEHRLKYQCFKSAWMYEVLHEGFHFPYDYPNLQTAQLVYDREVQWTLGAILYKTRFLPLRDLRQGQGGVRPAHGSWLRLSFVYNHYLFFACTLVVLLAIVLYLLRIHRIHRRQTRASAPLDLLWIEQVVPMIGVQVGP.

Residues Met-1–Arg-28 are Cytoplasmic-facing. Residues Val-29–Leu-49 form a helical membrane-spanning segment. Over Arg-50–Ser-548 the chain is Vesicular. Catalysis depends on Glu-217, which acts as the Proton acceptor. A glycan (N-linked (GlcNAc...) asparagine) is linked at Asn-330. The cysteines at positions 448 and 477 are disulfide-linked. A helical membrane pass occupies residues Phe-549–Leu-569. The Cytoplasmic segment spans residues Tyr-570–Pro-606.

This sequence belongs to the GDA1/CD39 NTPase family. The cofactor is Ca(2+). Mg(2+) is required as a cofactor. Widely expressed. Expressed at high level in brain, kidney, liver, testis and small intestin. Weakly expressed in lung, thymus and heart.

It is found in the cytoplasmic vesicle membrane. It carries out the reaction a ribonucleoside 5'-triphosphate + H2O = a ribonucleoside 5'-diphosphate + phosphate + H(+). The catalysed reaction is UTP + H2O = UDP + phosphate + H(+). The enzyme catalyses GTP + H2O = GDP + phosphate + H(+). It catalyses the reaction CTP + H2O = CDP + phosphate + H(+). It carries out the reaction ATP + H2O = ADP + phosphate + H(+). Its function is as follows. Catalyzes the hydrolysis of nucleoside triphosphates and diphosphates in a calcium- or magnesium-dependent manner. Preferentially hydrolyzes nucleoside 5'-triphosphates, with substrate preference for UTP &gt; GTP &gt; CTP. Hydrolyzes nucleoside diphosphates only to a minor extent. In contrast to its human ortholog is able to hydrolyze ATP. In the epithelial cells of small intestine controls luminal ATP levels, therefore regulating Th17-cell development. In Mus musculus (Mouse), this protein is Ectonucleoside triphosphate diphosphohydrolase 7 (Entpd7).